A 101-amino-acid polypeptide reads, in one-letter code: Small ribosomal subunit protein uS14 (101 aa).

Positions 1 to 26 (MAKVSSIQKNKSRQKKSQSLHNKRSE) are disordered. The span at 10–22 (NKSRQKKSQSLHN) shows a compositional bias: basic residues.

It belongs to the universal ribosomal protein uS14 family. Part of the 30S ribosomal subunit. Contacts proteins S3 and S10.

In terms of biological role, binds 16S rRNA, required for the assembly of 30S particles and may also be responsible for determining the conformation of the 16S rRNA at the A site. This Rickettsia prowazekii (strain Madrid E) protein is Small ribosomal subunit protein uS14.